The primary structure comprises 390 residues: Chorismate synthase 1 (390 aa).

NADP(+) contacts are provided by arginine 39 and arginine 45. Residues 95-117 form a disordered region; the sequence is EQEEKEMKRKVTKPRPGHADLNG. FMN contacts are provided by residues 132–134, 253–254, glycine 298, 313–317, and arginine 339; these read RSS, NA, and KPIPT.

This sequence belongs to the chorismate synthase family. Homotetramer. FMNH2 serves as cofactor.

The catalysed reaction is 5-O-(1-carboxyvinyl)-3-phosphoshikimate = chorismate + phosphate. Its pathway is metabolic intermediate biosynthesis; chorismate biosynthesis; chorismate from D-erythrose 4-phosphate and phosphoenolpyruvate: step 7/7. Its function is as follows. Catalyzes the anti-1,4-elimination of the C-3 phosphate and the C-6 proR hydrogen from 5-enolpyruvylshikimate-3-phosphate (EPSP) to yield chorismate, which is the branch point compound that serves as the starting substrate for the three terminal pathways of aromatic amino acid biosynthesis. This reaction introduces a second double bond into the aromatic ring system. This is Chorismate synthase 1 from Bacillus cereus (strain ZK / E33L).